Reading from the N-terminus, the 439-residue chain is Serine/threonine-protein kinase 2 (439 aa).

The 353-residue stretch at 87–439 (NDDFYHISTG…IFSDWINGGN (353 aa)) folds into the Protein kinase domain. ATP is bound by residues 93-101 (ISTGGYGIV) and K117. D307 acts as the Proton acceptor in catalysis.

The protein belongs to the protein kinase superfamily. Ser/Thr protein kinase family. Poxviruses subfamily. Post-translationally, phosphorylated in vivo. Autophosphorylated in vitro.

Its subcellular location is the host endoplasmic reticulum. It is found in the host endoplasmic reticulum-Golgi intermediate compartment. It catalyses the reaction L-seryl-[protein] + ATP = O-phospho-L-seryl-[protein] + ADP + H(+). The catalysed reaction is L-threonyl-[protein] + ATP = O-phospho-L-threonyl-[protein] + ADP + H(+). Essential serine-protein kinase involved in the early stage of virion morphogenesis. This Vaccinia virus (strain Copenhagen) (VACV) protein is Serine/threonine-protein kinase 2 (OPG054).